The primary structure comprises 166 residues: Interferon gamma (166 aa).

A signal peptide spans 1 to 23 (MKYTSYFLALLLCVLLGFSGSYG). Q24 carries the pyrrolidone carboxylic acid modification. N39 and N106 each carry an N-linked (GlcNAc...) asparagine glycan.

It belongs to the type II (or gamma) interferon family. In terms of assembly, homodimer. Interacts with IFNGR1 (via extracellular domain); this interaction promotes IFNGR1 dimerization. Released primarily from activated T lymphocytes.

The protein resides in the secreted. Its function is as follows. Type II interferon produced by immune cells such as T-cells and NK cells that plays crucial roles in antimicrobial, antiviral, and antitumor responses by activating effector immune cells and enhancing antigen presentation. Primarily signals through the JAK-STAT pathway after interaction with its receptor IFNGR1 to affect gene regulation. Upon IFNG binding, IFNGR1 intracellular domain opens out to allow association of downstream signaling components JAK2, JAK1 and STAT1, leading to STAT1 activation, nuclear translocation and transcription of IFNG-regulated genes. Many of the induced genes are transcription factors such as IRF1 that are able to further drive regulation of a next wave of transcription. Plays a role in class I antigen presentation pathway by inducing a replacement of catalytic proteasome subunits with immunoproteasome subunits. In turn, increases the quantity, quality, and repertoire of peptides for class I MHC loading. Increases the efficiency of peptide generation also by inducing the expression of activator PA28 that associates with the proteasome and alters its proteolytic cleavage preference. Up-regulates as well MHC II complexes on the cell surface by promoting expression of several key molecules such as cathepsins B/CTSB, H/CTSH, and L/CTSL. Participates in the regulation of hematopoietic stem cells during development and under homeostatic conditions by affecting their development, quiescence, and differentiation. The chain is Interferon gamma (IFNG) from Bubalus bubalis (Domestic water buffalo).